Here is a 510-residue protein sequence, read N- to C-terminus: GTPase Der (510 aa).

EngA-type G domains follow at residues 3–166 (PVVA…ATAL) and 220–393 (IKIA…ACAT). Residues 9 to 16 (GRPNVGKS), 56 to 60 (DTGGI), 118 to 121 (NKTD), 226 to 233 (GRPNVGKS), 273 to 277 (DTAGV), and 338 to 341 (NKWD) contribute to the GTP site. The KH-like domain occupies 394 to 478 (QKTSTSMLTR…PIRIQFQEGN (85 aa)).

This sequence belongs to the TRAFAC class TrmE-Era-EngA-EngB-Septin-like GTPase superfamily. EngA (Der) GTPase family. Associates with the 50S ribosomal subunit.

Functionally, GTPase that plays an essential role in the late steps of ribosome biogenesis. This Haemophilus ducreyi (strain 35000HP / ATCC 700724) protein is GTPase Der.